Reading from the N-terminus, the 582-residue chain is Transcription factor PCF5 (582 aa).

Disordered stretches follow at residues 30–78 and 123–195; these read AAGK…QHDH and SPMG…GGGG. The span at 51–64 shows a compositional bias: gly residues; sequence GGDGGGVGGGGSGG. The TCP domain maps to 213 to 271; that stretch reads RKDRHSKVCTARGPRDRRVRLSAHTAIQFYDVQDRLGYDRPSKAVDWLIKNAKDAIDKL. Disordered stretches follow at residues 283 to 306, 402 to 423, and 548 to 582; these read GAGAGNAAAPPSSSTHPDSAENSD, MFHHQQHRHGGGGGGGNGTTQQ, and RLPARIQGDEEHNGGGGGNGDKPPPPSSVSSASHH.

As to quaternary structure, forms homodimers and heterodimers with PCF2.

Its subcellular location is the nucleus. In terms of biological role, transcription activator. Binds the promoter core sequence 5'-GGNCC-3'. The protein is Transcription factor PCF5 (PCF5) of Oryza sativa subsp. indica (Rice).